The sequence spans 355 residues: MQVSDFHFDLPDELIARYPMTERTASRLLQLDGQTGALRHGQFVDVLDQLNPGDLLVFNNTRVIPARMFGQKASGGKLEVLVERMLDEHSVLAHVRSSKSPKPGTRLILDGGADGEKVEAEMRARHDALFEIHFLDPRPVLEILEAIGHMPLPPYIDRPDEDADKERYQTVYNQKPGAVAAPTAGLHFDEPLLEKIRAKGVETAFVTLHVGAGTFQPVRVDKIEDHHMHSEYAEVPQEVVDAIAATRARGGRVIAVGTTSVRSLESAAKVTLAQGKPLAPFFSDTDIFIFPGYQFQVVDAMVTNFHLPESTLIMLVSAFAGYDNVMSAYQAAVAEQYRFFSYGDAMFVTRRRAQA.

It belongs to the QueA family. As to quaternary structure, monomer.

The protein resides in the cytoplasm. The catalysed reaction is 7-aminomethyl-7-carbaguanosine(34) in tRNA + S-adenosyl-L-methionine = epoxyqueuosine(34) in tRNA + adenine + L-methionine + 2 H(+). The protein operates within tRNA modification; tRNA-queuosine biosynthesis. Functionally, transfers and isomerizes the ribose moiety from AdoMet to the 7-aminomethyl group of 7-deazaguanine (preQ1-tRNA) to give epoxyqueuosine (oQ-tRNA). The polypeptide is S-adenosylmethionine:tRNA ribosyltransferase-isomerase (Aeromonas hydrophila subsp. hydrophila (strain ATCC 7966 / DSM 30187 / BCRC 13018 / CCUG 14551 / JCM 1027 / KCTC 2358 / NCIMB 9240 / NCTC 8049)).